The chain runs to 431 residues: Serine hydroxymethyltransferase (431 aa).

(6S)-5,6,7,8-tetrahydrofolate contacts are provided by residues L128 and 132–134 (GHL). N6-(pyridoxal phosphate)lysine is present on K237.

The protein belongs to the SHMT family. Homodimer. Pyridoxal 5'-phosphate is required as a cofactor.

Its subcellular location is the cytoplasm. The catalysed reaction is (6R)-5,10-methylene-5,6,7,8-tetrahydrofolate + glycine + H2O = (6S)-5,6,7,8-tetrahydrofolate + L-serine. It functions in the pathway one-carbon metabolism; tetrahydrofolate interconversion. It participates in amino-acid biosynthesis; glycine biosynthesis; glycine from L-serine: step 1/1. In terms of biological role, catalyzes the reversible interconversion of serine and glycine with tetrahydrofolate (THF) serving as the one-carbon carrier. This reaction serves as the major source of one-carbon groups required for the biosynthesis of purines, thymidylate, methionine, and other important biomolecules. Also exhibits THF-independent aldolase activity toward beta-hydroxyamino acids, producing glycine and aldehydes, via a retro-aldol mechanism. The polypeptide is Serine hydroxymethyltransferase (Ruegeria pomeroyi (strain ATCC 700808 / DSM 15171 / DSS-3) (Silicibacter pomeroyi)).